A 225-amino-acid polypeptide reads, in one-letter code: Ribonuclease 3 (225 aa).

In terms of domain architecture, RNase III spans 5 to 127; sequence IEKLTRQLGY…IIGAVYLDSD (123 aa). A Mg(2+)-binding site is contributed by glutamate 40. Aspartate 44 is a catalytic residue. Positions 113 and 116 each coordinate Mg(2+). Glutamate 116 is a catalytic residue. Residues 154–224 form the DRBM domain; that stretch reads DPKTRLQEFL…AELALEQLTN (71 aa).

Belongs to the ribonuclease III family. Homodimer. Mg(2+) serves as cofactor.

It is found in the cytoplasm. It carries out the reaction Endonucleolytic cleavage to 5'-phosphomonoester.. Digests double-stranded RNA. Involved in the processing of primary rRNA transcript to yield the immediate precursors to the large and small rRNAs (23S and 16S). Processes some mRNAs, and tRNAs when they are encoded in the rRNA operon. Processes pre-crRNA and tracrRNA of type II CRISPR loci if present in the organism. This chain is Ribonuclease 3, found in Vibrio vulnificus (strain CMCP6).